Reading from the N-terminus, the 143-residue chain is MRDADADAGGGADGGDGRGGHSCRGGVDTAAAPAGGAPPAHAPGPGRDAASAARGSRMRPHIFTLSVPFPTPLEAEIAHGSLAPDAEPHQRVVGKDLTVSGRILVVRWKAEDCRLLRISVINFLDQLSLVVRTMQRFGPPVSR.

Positions 1–57 (MRDADADAGGGADGGDGRGGHSCRGGVDTAAAPAGGAPPAHAPGPGRDAASAARGSR) are disordered. Residues 30 to 55 (AAAPAGGAPPAHAPGPGRDAASAARG) are compositionally biased toward low complexity.

Belongs to the CTAG/PCC1 family. As to quaternary structure, component of the EKC/KEOPS complex composed of at least GON7, TP53RK, TPRKB, OSGEP and LAGE3; the whole complex dimerizes. Ubiquitous.

The protein localises to the cytoplasm. Its subcellular location is the nucleus. In terms of biological role, component of the EKC/KEOPS complex that is required for the formation of a threonylcarbamoyl group on adenosine at position 37 (t(6)A37) in tRNAs that read codons beginning with adenine. The complex is probably involved in the transfer of the threonylcarbamoyl moiety of threonylcarbamoyl-AMP (TC-AMP) to the N6 group of A37. LAGE3 functions as a dimerization module for the complex. This is EKC/KEOPS complex subunit LAGE3 from Homo sapiens (Human).